Reading from the N-terminus, the 243-residue chain is uncharacterized protein (243 aa).

The signal sequence occupies residues 1-19 (MKSLPLLGILAFAANRLSA). N-linked (GlcNAc...) asparagine glycans are attached at residues asparagine 112 and asparagine 206.

This is an uncharacterized protein from Encephalitozoon cuniculi (strain GB-M1) (Microsporidian parasite).